Reading from the N-terminus, the 399-residue chain is Ribonucleoside-diphosphate reductase small chain 1 (399 aa).

S15, S24, and S41 each carry phosphoserine. The Fe cation site is built by D145, E176, and H179. Residue Y183 is part of the active site. Residues E239, E273, and H276 each coordinate Fe cation.

This sequence belongs to the ribonucleoside diphosphate reductase small chain family. As to quaternary structure, heterotetramer of two large (R1) and two small (R2) subunits. S.cerevisiae has two different R1 subunits (RNR1 and RNR3) and two different R2 subunits (RNR2 and RNR4). The functional form of the small subunits is a RNR2-RNR4 heterodimer, where RNR2 provides the iron-radical center and RNR4 is required for proper folding of RNR2 and assembly with the large subunits. Under normal growth conditions, the active form of the large subunits is a homodimer of the constitutively expressed RNR1. In damaged cells or cells arrested for DNA synthesis, the reductase consists of multiple species because of the association of the small subunits (RNR2-RNR4) with either the RNR1 homodimer or a heterodimer of RNR1 and the damage-inducible RNR3. Interacts with DIF1. Fe cation serves as cofactor.

Its subcellular location is the nucleus. The enzyme catalyses a 2'-deoxyribonucleoside 5'-diphosphate + [thioredoxin]-disulfide + H2O = a ribonucleoside 5'-diphosphate + [thioredoxin]-dithiol. Its function is as follows. Provides the precursors necessary for DNA synthesis. Catalyzes the biosynthesis of deoxyribonucleotides from the corresponding ribonucleotides. RNR2 provides the diiron-tyrosyl radical center. The polypeptide is Ribonucleoside-diphosphate reductase small chain 1 (RNR2) (Saccharomyces cerevisiae (strain ATCC 204508 / S288c) (Baker's yeast)).